Reading from the N-terminus, the 1690-residue chain is DNA-directed RNA polymerase subunit beta' (1690 aa).

Zn(2+) contacts are provided by C63, C65, C78, and C81. The Mg(2+) site is built by D753, D755, and D757. Zn(2+) is bound by residues C1107, C1295, C1302, and C1305.

The protein belongs to the RNA polymerase beta' chain family. As to quaternary structure, the RNAP catalytic core consists of 2 alpha, 1 beta, 1 beta' and 1 omega subunit. When a sigma factor is associated with the core the holoenzyme is formed, which can initiate transcription. Requires Mg(2+) as cofactor. It depends on Zn(2+) as a cofactor.

The enzyme catalyses RNA(n) + a ribonucleoside 5'-triphosphate = RNA(n+1) + diphosphate. In terms of biological role, DNA-dependent RNA polymerase catalyzes the transcription of DNA into RNA using the four ribonucleoside triphosphates as substrates. The protein is DNA-directed RNA polymerase subunit beta' of Thermotoga maritima (strain ATCC 43589 / DSM 3109 / JCM 10099 / NBRC 100826 / MSB8).